A 391-amino-acid polypeptide reads, in one-letter code: 4-hydroxy-3-methylbut-2-en-1-yl diphosphate synthase (flavodoxin) (391 aa).

[4Fe-4S] cluster-binding residues include Cys-286, Cys-289, Cys-321, and Glu-328.

It belongs to the IspG family. The cofactor is [4Fe-4S] cluster.

The catalysed reaction is (2E)-4-hydroxy-3-methylbut-2-enyl diphosphate + oxidized [flavodoxin] + H2O + 2 H(+) = 2-C-methyl-D-erythritol 2,4-cyclic diphosphate + reduced [flavodoxin]. It functions in the pathway isoprenoid biosynthesis; isopentenyl diphosphate biosynthesis via DXP pathway; isopentenyl diphosphate from 1-deoxy-D-xylulose 5-phosphate: step 5/6. Functionally, converts 2C-methyl-D-erythritol 2,4-cyclodiphosphate (ME-2,4cPP) into 1-hydroxy-2-methyl-2-(E)-butenyl 4-diphosphate. The protein is 4-hydroxy-3-methylbut-2-en-1-yl diphosphate synthase (flavodoxin) of Corynebacterium diphtheriae (strain ATCC 700971 / NCTC 13129 / Biotype gravis).